A 380-amino-acid polypeptide reads, in one-letter code: Ceramide-binding protein svf1 (380 aa).

The peripherally associates with membranes stretch occupies residues 1-18; sequence MKAWLQSSISYYTGTAEP.

Belongs to the SVF1 family.

It is found in the golgi apparatus. It localises to the cis-Golgi network membrane. Its subcellular location is the endoplasmic reticulum membrane. The protein resides in the cytoplasm. The protein localises to the nucleus. Functionally, ceramide-binding protein that may transfer ceramides from the endoplasmic reticulum membrane to the cis-Golgi network membrane, and is thereby required for the biosynthesis of complex sphingolipids. In Schizosaccharomyces pombe (strain 972 / ATCC 24843) (Fission yeast), this protein is Ceramide-binding protein svf1.